A 756-amino-acid polypeptide reads, in one-letter code: MEQKFKKGKDHGVGVLTSGGDSQGMNAAVRSVVRETIRQGHRCYLIREGYNGLINGNIELAKWAHVANVTHLGGSMIGTSRCDEFRTTDGRKKAAAIMFDKRIFHLIVIGGDGSLMGAQKLKEEWGRFGEELFAEGKITEEVANEGRELHLAGIVGSIDNDCIESDKSIGSDTALHRICEAIDGLVMTAQSHQRVFVVEVMGRHCGYLALTAAIAVEADYVFYPEIPPDEKWPEQLCHQLGSVRKMGKRQNVIILGEGVTNSKGQRIDVRQVKEEIETRLQLEVRIATLGHLQRGGAPSFLDRLIGLRMGYEAVQEVLKGKEEKEGAVVTGQKTIAKVMCLRGHNIQRNELSRVIRQTETANEEIMQRHSDLACRLRGFGFLDKQTYLNFVSIPLSTTMPSRTKTFAVVHIGSPCAGMNAATYSFTRMANHSGIQVIGIKHGWDGLKNKDVKLLTWANVQGWAQFGGSMLGTKRQLPSEMDLIAEGLNSNNVDGLVIIGGFMAFESALILQQNRSEYTCLSIPIVVIPATISNNCPGTCMSLGVDTALNEICRQVDNISQNAIGSKNKVMIIETMGSRSGFLATMTALSTGSQFALIRQVETNEKDLEKLAIETKERLDSGNLEKFLLIRSEGASDEIYSPDVKKIFDKVMKNKYGVRITNLGYSQLGGHPSCFDRQMGIRMGVRAFEGIVNPVKMGDRDCCVIGLRGSSLRYVPVQGLGKKVCFEHGVPHNMWWLDLHPLVEAMTKKPQEAVLSS.

The segment at 1-393 (MEQKFKKGKD…KQTYLNFVSI (393 aa)) is N-terminal catalytic PFK domain 1. ATP-binding positions include glycine 20, 81–82 (RC), and 111–114 (GDGS). A Mg(2+)-binding site is contributed by aspartate 112. Substrate-binding positions include 157–159 (SID), arginine 194, 201–203 (MGR), glutamate 257, arginine 285, and 291–294 (HLQR). The Proton acceptor role is filled by aspartate 159. The tract at residues 394–404 (PLSTTMPSRTK) is interdomain linker. Residues 405–756 (TFAVVHIGSP…KKPQEAVLSS (352 aa)) are C-terminal regulatory PFK domain 2. Beta-D-fructose 2,6-bisphosphate is bound by residues arginine 474, 530–534 (TISNN), 575–577 (MGS), glutamate 632, arginine 658, and 664–667 (YSQL).

Belongs to the phosphofructokinase type A (PFKA) family. ATP-dependent PFK group I subfamily. Eukaryotic two domain clade 'E' sub-subfamily. Homotetramer. It depends on Mg(2+) as a cofactor.

Its subcellular location is the cytoplasm. It catalyses the reaction beta-D-fructose 6-phosphate + ATP = beta-D-fructose 1,6-bisphosphate + ADP + H(+). Its pathway is carbohydrate degradation; glycolysis; D-glyceraldehyde 3-phosphate and glycerone phosphate from D-glucose: step 3/4. Allosterically activated by ADP, AMP, or fructose 2,6-bisphosphate, and allosterically inhibited by ATP or citrate. Its function is as follows. Catalyzes the phosphorylation of D-fructose 6-phosphate to fructose 1,6-bisphosphate by ATP, the first committing step of glycolysis. The polypeptide is ATP-dependent 6-phosphofructokinase 2 (Caenorhabditis elegans).